The primary structure comprises 555 residues: Potassium-transporting ATPase potassium-binding subunit (555 aa).

The next 10 helical transmembrane spans lie at 2–22 (IWVAVVITMLLFILVAKPTGI), 60–80 (QYALSLVLLNGFMIVVVYFIF), 130–150 (IGITFLMFAAPATTLALVMAF), 173–193 (VFLPIAFMAALVFVAFGVPQT), 246–266 (MSNILQMMLMMLLPTALPFTY), 278–298 (ILFVSLFMVFLLGFITITTSE), 374–394 (AGFVNIIMYAIIAVFISGLMV), 412–432 (LIAVTILFHPLLILGFSALAL), 483–503 (LVMFLGRYFSLITMLAVAASL), and 525–545 (GIFIGTIVIVGALTFFPMLVL).

It belongs to the KdpA family. The system is composed of three essential subunits: KdpA, KdpB and KdpC.

The protein resides in the cell membrane. Functionally, part of the high-affinity ATP-driven potassium transport (or Kdp) system, which catalyzes the hydrolysis of ATP coupled with the electrogenic transport of potassium into the cytoplasm. This subunit binds the extracellular potassium ions and delivers the ions to the membrane domain of KdpB through an intramembrane tunnel. In Bacillus cereus (strain ZK / E33L), this protein is Potassium-transporting ATPase potassium-binding subunit.